A 558-amino-acid polypeptide reads, in one-letter code: Potassium-transporting ATPase potassium-binding subunit 1 (558 aa).

A run of 12 helical transmembrane segments spans residues 1–21 (MEII…SGYL), 66–86 (FNGF…WLFL), 127–147 (MIVM…VCIA), 166–186 (IVRF…ILLM), 245–265 (IWSN…MLFL), 281–301 (ALIL…LTMW), 327–347 (FGAG…TGSV), 354–374 (LTPI…VFGG), 377–397 (VGLM…SLMV), 416–436 (IVLV…LAFM), 482–502 (ISTG…QLMI), and 531–551 (IVFI…LGPI).

Belongs to the KdpA family. In terms of assembly, the system is composed of three essential subunits: KdpA, KdpB and KdpC.

It localises to the cell membrane. Part of the high-affinity ATP-driven potassium transport (or Kdp) system, which catalyzes the hydrolysis of ATP coupled with the electrogenic transport of potassium into the cytoplasm. This subunit binds the extracellular potassium ions and delivers the ions to the membrane domain of KdpB through an intramembrane tunnel. The sequence is that of Potassium-transporting ATPase potassium-binding subunit 1 from Staphylococcus aureus (strain Mu50 / ATCC 700699).